We begin with the raw amino-acid sequence, 338 residues long: 4-hydroxy-2-oxovalerate aldolase (338 aa).

The 251-residue stretch at 6-256 (IHIVDTTLRD…RTGVDFYKVM (251 aa)) folds into the Pyruvate carboxyltransferase domain. 14 to 15 (RD) is a binding site for substrate. Position 15 (Asp15) interacts with Mn(2+). The active-site Proton acceptor is His18. Residues Ser168 and His195 each contribute to the substrate site. Positions 195 and 197 each coordinate Mn(2+). Substrate is bound at residue Tyr286.

This sequence belongs to the 4-hydroxy-2-oxovalerate aldolase family.

The enzyme catalyses (S)-4-hydroxy-2-oxopentanoate = acetaldehyde + pyruvate. The sequence is that of 4-hydroxy-2-oxovalerate aldolase from Moorella thermoacetica (strain ATCC 39073 / JCM 9320).